The following is a 66-amino-acid chain: Photosystem II reaction center protein J (66 aa).

A helical membrane pass occupies residues 37–57; it reads LWLVATAGGMAVIFVVGLFFY.

It belongs to the PsbJ family. In terms of assembly, PSII is composed of 1 copy each of membrane proteins PsbA, PsbB, PsbC, PsbD, PsbE, PsbF, PsbH, PsbI, PsbJ, PsbK, PsbL, PsbM, PsbT, PsbX, PsbY, PsbZ, Psb30/Ycf12, peripheral proteins PsbO, CyanoQ (PsbQ), PsbU, PsbV and a large number of cofactors. It forms dimeric complexes.

The protein resides in the cellular thylakoid membrane. One of the components of the core complex of photosystem II (PSII). PSII is a light-driven water:plastoquinone oxidoreductase that uses light energy to abstract electrons from H(2)O, generating O(2) and a proton gradient subsequently used for ATP formation. It consists of a core antenna complex that captures photons, and an electron transfer chain that converts photonic excitation into a charge separation. The polypeptide is Photosystem II reaction center protein J (Synechococcus sp. (strain CC9311)).